A 94-amino-acid chain; its full sequence is Co-chaperonin GroES (94 aa).

Belongs to the GroES chaperonin family. Heptamer of 7 subunits arranged in a ring. Interacts with the chaperonin GroEL.

It localises to the cytoplasm. Functionally, together with the chaperonin GroEL, plays an essential role in assisting protein folding. The GroEL-GroES system forms a nano-cage that allows encapsulation of the non-native substrate proteins and provides a physical environment optimized to promote and accelerate protein folding. GroES binds to the apical surface of the GroEL ring, thereby capping the opening of the GroEL channel. This Staphylococcus epidermidis (strain ATCC 35984 / DSM 28319 / BCRC 17069 / CCUG 31568 / BM 3577 / RP62A) protein is Co-chaperonin GroES.